Here is a 601-residue protein sequence, read N- to C-terminus: Probable serine/threonine-protein kinase WNK3 (601 aa).

The 258-residue stretch at 34-291 folds into the Protein kinase domain; sequence GRFNEILGKG…ARELLDDPFL (258 aa). ATP-binding positions include 114–117 and K164; that span reads TELF. The active-site Proton acceptor is the D181. Disordered regions lie at residues 470 to 498 and 551 to 601; these read GWRPGPATDDDDDDDLVGGGDDPDAPGGA and ADDD…SEQP. Over residues 477–493 the composition is skewed to acidic residues; the sequence is TDDDDDDDLVGGGDDPD. Positions 560–571 are enriched in polar residues; it reads LQGSSSDTGGSN. A compositionally biased stretch (basic and acidic residues) spans 572 to 583; sequence HEQHAMGKDKEV.

This sequence belongs to the protein kinase superfamily. Ser/Thr protein kinase family. WNK subfamily.

The enzyme catalyses L-seryl-[protein] + ATP = O-phospho-L-seryl-[protein] + ADP + H(+). The catalysed reaction is L-threonyl-[protein] + ATP = O-phospho-L-threonyl-[protein] + ADP + H(+). The chain is Probable serine/threonine-protein kinase WNK3 (WNK3) from Oryza sativa subsp. japonica (Rice).